Here is a 743-residue protein sequence, read N- to C-terminus: Phosphoribosylformylglycinamidine synthase subunit PurL (743 aa).

The active site involves His-50. ATP contacts are provided by Tyr-53 and Lys-92. Glu-94 is a binding site for Mg(2+). Substrate contacts are provided by residues 95-98 (SHNH) and Arg-117. The active-site Proton acceptor is His-96. Asp-118 lines the Mg(2+) pocket. Gln-241 provides a ligand contact to substrate. A Mg(2+)-binding site is contributed by Asp-269. 313 to 315 (ESQ) is a binding site for substrate. 2 residues coordinate ATP: Asp-495 and Gly-532. Asn-533 contributes to the Mg(2+) binding site. Ser-535 contributes to the substrate binding site.

This sequence belongs to the FGAMS family. Monomer. Part of the FGAM synthase complex composed of 1 PurL, 1 PurQ and 2 PurS subunits.

It is found in the cytoplasm. The enzyme catalyses N(2)-formyl-N(1)-(5-phospho-beta-D-ribosyl)glycinamide + L-glutamine + ATP + H2O = 2-formamido-N(1)-(5-O-phospho-beta-D-ribosyl)acetamidine + L-glutamate + ADP + phosphate + H(+). Its pathway is purine metabolism; IMP biosynthesis via de novo pathway; 5-amino-1-(5-phospho-D-ribosyl)imidazole from N(2)-formyl-N(1)-(5-phospho-D-ribosyl)glycinamide: step 1/2. In terms of biological role, part of the phosphoribosylformylglycinamidine synthase complex involved in the purines biosynthetic pathway. Catalyzes the ATP-dependent conversion of formylglycinamide ribonucleotide (FGAR) and glutamine to yield formylglycinamidine ribonucleotide (FGAM) and glutamate. The FGAM synthase complex is composed of three subunits. PurQ produces an ammonia molecule by converting glutamine to glutamate. PurL transfers the ammonia molecule to FGAR to form FGAM in an ATP-dependent manner. PurS interacts with PurQ and PurL and is thought to assist in the transfer of the ammonia molecule from PurQ to PurL. The sequence is that of Phosphoribosylformylglycinamidine synthase subunit PurL from Rhizobium etli (strain ATCC 51251 / DSM 11541 / JCM 21823 / NBRC 15573 / CFN 42).